We begin with the raw amino-acid sequence, 137 residues long: Nucleoside diphosphate kinase (137 aa).

Positions 9, 57, 85, 91, 102, and 112 each coordinate ATP. The active-site Pros-phosphohistidine intermediate is histidine 115.

The protein belongs to the NDK family. In terms of assembly, homotetramer. Mg(2+) is required as a cofactor.

It is found in the cytoplasm. It carries out the reaction a 2'-deoxyribonucleoside 5'-diphosphate + ATP = a 2'-deoxyribonucleoside 5'-triphosphate + ADP. The enzyme catalyses a ribonucleoside 5'-diphosphate + ATP = a ribonucleoside 5'-triphosphate + ADP. Its function is as follows. Major role in the synthesis of nucleoside triphosphates other than ATP. The ATP gamma phosphate is transferred to the NDP beta phosphate via a ping-pong mechanism, using a phosphorylated active-site intermediate. The sequence is that of Nucleoside diphosphate kinase from Desulfotalea psychrophila (strain LSv54 / DSM 12343).